The primary structure comprises 155 residues: Ribonuclease H (155 aa).

In terms of domain architecture, RNase H type-1 spans 4–146 (NIDVVEIYTD…CDRLATEQIK (143 aa)). The Mg(2+) site is built by aspartate 13, glutamate 51, aspartate 73, and aspartate 138.

It belongs to the RNase H family. As to quaternary structure, monomer. It depends on Mg(2+) as a cofactor.

Its subcellular location is the cytoplasm. The catalysed reaction is Endonucleolytic cleavage to 5'-phosphomonoester.. In terms of biological role, endonuclease that specifically degrades the RNA of RNA-DNA hybrids. The sequence is that of Ribonuclease H from Thermoanaerobacter pseudethanolicus (strain ATCC 33223 / 39E) (Clostridium thermohydrosulfuricum).